The primary structure comprises 477 residues: Glycogen synthase (477 aa).

Residue Lys-15 participates in ADP-alpha-D-glucose binding.

This sequence belongs to the glycosyltransferase 1 family. Bacterial/plant glycogen synthase subfamily.

The catalysed reaction is [(1-&gt;4)-alpha-D-glucosyl](n) + ADP-alpha-D-glucose = [(1-&gt;4)-alpha-D-glucosyl](n+1) + ADP + H(+). It functions in the pathway glycan biosynthesis; glycogen biosynthesis. Synthesizes alpha-1,4-glucan chains using ADP-glucose. The polypeptide is Glycogen synthase (Shigella boydii serotype 18 (strain CDC 3083-94 / BS512)).